A 454-amino-acid polypeptide reads, in one-letter code: Bifunctional protein GlmU (454 aa).

A pyrophosphorylase region spans residues 1–228 (MTLPLHVVIL…PQDVEGANDP (228 aa)). UDP-N-acetyl-alpha-D-glucosamine contacts are provided by residues 10-13 (LAAG), Lys-24, Gln-76, 81-82 (GT), 103-105 (YGD), Gly-138, Glu-153, Asn-168, and Asn-226. Position 105 (Asp-105) interacts with Mg(2+). Position 226 (Asn-226) interacts with Mg(2+). Residues 229–249 (WQLAQLERAWQLRAARALCLQ) are linker. The tract at residues 250–454 (GVRMADPARV…IEGWERPKKK (205 aa)) is N-acetyltransferase. Residues Arg-332 and Lys-350 each coordinate UDP-N-acetyl-alpha-D-glucosamine. His-362 acts as the Proton acceptor in catalysis. Residues Tyr-365 and Asn-376 each coordinate UDP-N-acetyl-alpha-D-glucosamine. Acetyl-CoA contacts are provided by residues Ala-379, 385-386 (NY), Ser-404, Ala-422, and Arg-439.

This sequence in the N-terminal section; belongs to the N-acetylglucosamine-1-phosphate uridyltransferase family. In the C-terminal section; belongs to the transferase hexapeptide repeat family. As to quaternary structure, homotrimer. It depends on Mg(2+) as a cofactor.

The protein resides in the cytoplasm. It catalyses the reaction alpha-D-glucosamine 1-phosphate + acetyl-CoA = N-acetyl-alpha-D-glucosamine 1-phosphate + CoA + H(+). The catalysed reaction is N-acetyl-alpha-D-glucosamine 1-phosphate + UTP + H(+) = UDP-N-acetyl-alpha-D-glucosamine + diphosphate. It functions in the pathway nucleotide-sugar biosynthesis; UDP-N-acetyl-alpha-D-glucosamine biosynthesis; N-acetyl-alpha-D-glucosamine 1-phosphate from alpha-D-glucosamine 6-phosphate (route II): step 2/2. The protein operates within nucleotide-sugar biosynthesis; UDP-N-acetyl-alpha-D-glucosamine biosynthesis; UDP-N-acetyl-alpha-D-glucosamine from N-acetyl-alpha-D-glucosamine 1-phosphate: step 1/1. It participates in bacterial outer membrane biogenesis; LPS lipid A biosynthesis. In terms of biological role, catalyzes the last two sequential reactions in the de novo biosynthetic pathway for UDP-N-acetylglucosamine (UDP-GlcNAc). The C-terminal domain catalyzes the transfer of acetyl group from acetyl coenzyme A to glucosamine-1-phosphate (GlcN-1-P) to produce N-acetylglucosamine-1-phosphate (GlcNAc-1-P), which is converted into UDP-GlcNAc by the transfer of uridine 5-monophosphate (from uridine 5-triphosphate), a reaction catalyzed by the N-terminal domain. This Xanthomonas campestris pv. campestris (strain B100) protein is Bifunctional protein GlmU.